The following is a 110-amino-acid chain: UPF0122 protein RBAM_015800 (110 aa).

Belongs to the UPF0122 family.

Might take part in the signal recognition particle (SRP) pathway. This is inferred from the conservation of its genetic proximity to ftsY/ffh. May be a regulatory protein. In Bacillus velezensis (strain DSM 23117 / BGSC 10A6 / LMG 26770 / FZB42) (Bacillus amyloliquefaciens subsp. plantarum), this protein is UPF0122 protein RBAM_015800.